The following is a 474-amino-acid chain: Flotillin-like protein 3 (474 aa).

Residue C35 is the site of S-palmitoyl cysteine attachment. Coiled coils occupy residues E235 to A255 and Q305 to E325.

The protein belongs to the band 7/mec-2 family. Flotillin subfamily. In terms of processing, may be palmitoylated. Expressed in all plant organs. Primarily expressed in vascular tissues. No change in spatial expression in root upon inoculation. Expression limited to the nodule vascular tissue.

It localises to the cell membrane. The protein resides in the membrane. Its subcellular location is the caveola. Functionally, may act as a scaffolding protein within caveolar membranes, functionally participating in formation of caveolae or caveolae-like vesicles. May be involved in nodule formation. The polypeptide is Flotillin-like protein 3 (FLOT3) (Medicago truncatula (Barrel medic)).